The chain runs to 566 residues: Chaperone Ric-8 (566 aa).

This sequence belongs to the synembryn family. Interacts with GDP-bound G(i)-alpha protein. Does not interact with G-alpha proteins when they are in complex with subunits beta and gamma. Interacts with Frq2 in a Ca(2+)-independent manner but does not interact with Frq1.

It is found in the cytoplasm. It localises to the cell cortex. The protein localises to the presynapse. Functionally, chaperone that specifically binds and folds some, but not all, nascent G alpha proteins prior to G protein heterotrimer formation, promoting their stability and activity. Also acts as a guanine nucleotide exchange factor (GEF) for G alpha proteins by stimulating exchange of bound GDP for free GTP. Plays a key role in asymmetric spindle positioning, a step for asymmetric cell division that generates cell diversity during development by activating G(i) alpha protein independently of G-protein coupled receptors. Required during gastrulation and sensory organ precursor (SOP) formation. Plays a role in positively regulating synapse number and neurotransmitter release. This Drosophila pseudoobscura pseudoobscura (Fruit fly) protein is Chaperone Ric-8 (ric8a).